The chain runs to 156 residues: Beta-defensin 125 (156 aa).

The signal sequence occupies residues 1 to 20 (MNILMLTFIICGLLTRVTKG). 3 disulfides stabilise this stretch: Cys27-Cys55, Cys35-Cys49, and Cys39-Cys56. Positions 68-156 (PAFPVIHLED…PPSQTALTHN (89 aa)) are excised as a propeptide. The disordered stretch occupies residues 108 to 156 (GETMTPETNTPETTMPPSEATTPETTMPPSETATSETMPPPSQTALTHN). Over residues 109 to 144 (ETMTPETNTPETTMPPSEATTPETTMPPSETATSET) the composition is skewed to low complexity.

Belongs to the beta-defensin family.

The protein resides in the secreted. Its function is as follows. Has antibacterial activity. The sequence is that of Beta-defensin 125 (DEFB125) from Homo sapiens (Human).